The primary structure comprises 326 residues: uncharacterized protein (326 aa).

The S4 RNA-binding domain maps to 15 to 76 (VRIEKFCLKL…IEPYLHNHSE (62 aa)). Residue Asp147 is part of the active site.

This sequence belongs to the pseudouridine synthase RluA family.

It carries out the reaction a uridine in RNA = a pseudouridine in RNA. This is an uncharacterized protein from Mycoplasma pneumoniae (strain ATCC 29342 / M129 / Subtype 1) (Mycoplasmoides pneumoniae).